Consider the following 726-residue polypeptide: WD repeat-containing and planar cell polarity effector protein fritz homolog (726 aa).

2 WD repeats span residues 305–343 (LRSK…TLLA) and 344–383 (QAEL…INIQ). Residues 642 to 660 (SSGSTPKHTIQQKIPNGPS) show a composition bias toward polar residues. Residues 642 to 717 (SSGSTPKHTI…RRQDTEDVGS (76 aa)) form a disordered region. Positions 672–685 (MEETEEEEEEEEEA) are enriched in acidic residues. Basic and acidic residues predominate over residues 701-712 (GELREDHRRQDT).

This sequence belongs to the WD repeat fritz family. Component of the CPLANE (ciliogenesis and planar polarity effectors) complex, composed of INTU, FUZ and WDPCP. Interacts with CPLANE1.

The protein resides in the cell membrane. It localises to the cytoplasm. Its subcellular location is the cytoskeleton. The protein localises to the cilium axoneme. It is found in the cilium basal body. In terms of biological role, probable effector of the planar cell polarity signaling pathway which regulates the septin cytoskeleton in both ciliogenesis and collective cell movements. Together with FUZ and WDPCP proposed to function as core component of the CPLANE (ciliogenesis and planar polarity effectors) complex involved in the recruitment of peripheral IFT-A proteins to basal bodies. Binds phosphatidylinositol 3-phosphate with highest affinity, followed by phosphatidylinositol 4-phosphate and phosphatidylinositol 5-phosphate. This Rattus norvegicus (Rat) protein is WD repeat-containing and planar cell polarity effector protein fritz homolog (Wdpcp).